An 81-amino-acid chain; its full sequence is U1-sicaritoxin-Li1c (81 aa).

The propeptide occupies 1–16; sequence ARGDAEKWESLISEER. 4 disulfides stabilise this stretch: C18–C35, C26–C40, C34–C53, and C42–C51. R62 carries the post-translational modification Arginine amide. Positions 66–81 are excised as a propeptide; sequence ALMLDPETHRLLFSED.

This sequence belongs to the neurotoxin 28 (Litx) family. As to expression, expressed by the venom gland.

The protein resides in the secreted. In terms of biological role, toxin active against insects (S.frugiperda larvae). May act on sodium (Nav) or calcium (Cav) channels. This Loxosceles intermedia (Brown spider) protein is U1-sicaritoxin-Li1c.